The chain runs to 894 residues: Translation initiation factor IF-2 (894 aa).

A disordered region spans residues 47 to 305 (AHLNRENGSG…GSALQQSFQK (259 aa)). The segment covering 68-82 (STLNIPGTGGKSKSV) has biased composition (polar residues). Basic and acidic residues-rich tracts occupy residues 93–159 (VKRD…KDKV) and 166–219 (DMTK…KWTD). The segment covering 254–269 (GRSRNAKAARPAKKGN) has biased composition (basic residues). Residues 270 to 283 (KHSESKADREEARA) show a composition bias toward basic and acidic residues. Residues 393-562 (PRAPVVTIMG…LLQAEVLELK (170 aa)) form the tr-type G domain. The G1 stretch occupies residues 402 to 409 (GHVDHGKT). 402 to 409 (GHVDHGKT) serves as a coordination point for GTP. The segment at 427–431 (GITQH) is G2. A G3 region spans residues 448–451 (DTPG). Residues 448–452 (DTPGH) and 502–505 (NKID) each bind GTP. Residues 502–505 (NKID) are G4. Residues 538 to 540 (SAK) are G5.

This sequence belongs to the TRAFAC class translation factor GTPase superfamily. Classic translation factor GTPase family. IF-2 subfamily.

It localises to the cytoplasm. Its function is as follows. One of the essential components for the initiation of protein synthesis. Protects formylmethionyl-tRNA from spontaneous hydrolysis and promotes its binding to the 30S ribosomal subunits. Also involved in the hydrolysis of GTP during the formation of the 70S ribosomal complex. This Citrobacter koseri (strain ATCC BAA-895 / CDC 4225-83 / SGSC4696) protein is Translation initiation factor IF-2.